The chain runs to 260 residues: Proteasome subunit alpha 1 (260 aa).

The disordered stretch occupies residues 237-260 (AEADLLDTGEDADDEAEDEDATEE). Over residues 240–260 (DLLDTGEDADDEAEDEDATEE) the composition is skewed to acidic residues.

This sequence belongs to the peptidase T1A family. The 20S proteasome core is composed of 14 alpha and 14 beta subunits that assemble into four stacked heptameric rings, resulting in a barrel-shaped structure. The two inner rings, each composed of seven catalytic beta subunits, are sandwiched by two outer rings, each composed of seven alpha subunits. The catalytic chamber with the active sites is on the inside of the barrel. Has a gated structure, the ends of the cylinder being occluded by the N-termini of the alpha-subunits. Is capped at one or both ends by the proteasome regulatory ATPase, PAN.

It is found in the cytoplasm. Its activity is regulated as follows. The formation of the proteasomal ATPase PAN-20S proteasome complex, via the docking of the C-termini of PAN into the intersubunit pockets in the alpha-rings, triggers opening of the gate for substrate entry. Interconversion between the open-gate and close-gate conformations leads to a dynamic regulation of the 20S proteasome proteolysis activity. Its function is as follows. Component of the proteasome core, a large protease complex with broad specificity involved in protein degradation. The chain is Proteasome subunit alpha 1 from Haloarcula marismortui (strain ATCC 43049 / DSM 3752 / JCM 8966 / VKM B-1809) (Halobacterium marismortui).